The chain runs to 273 residues: Ribosomal RNA small subunit methyltransferase A (273 aa).

Asn-18, Leu-20, Gly-45, Glu-66, Asp-91, and Asn-113 together coordinate S-adenosyl-L-methionine.

It belongs to the class I-like SAM-binding methyltransferase superfamily. rRNA adenine N(6)-methyltransferase family. RsmA subfamily.

Its subcellular location is the cytoplasm. The enzyme catalyses adenosine(1518)/adenosine(1519) in 16S rRNA + 4 S-adenosyl-L-methionine = N(6)-dimethyladenosine(1518)/N(6)-dimethyladenosine(1519) in 16S rRNA + 4 S-adenosyl-L-homocysteine + 4 H(+). Its function is as follows. Specifically dimethylates two adjacent adenosines (A1518 and A1519) in the loop of a conserved hairpin near the 3'-end of 16S rRNA in the 30S particle. May play a critical role in biogenesis of 30S subunits. This is Ribosomal RNA small subunit methyltransferase A from Salmonella choleraesuis (strain SC-B67).